A 467-amino-acid chain; its full sequence is tRNA-2-methylthio-N(6)-dimethylallyladenosine synthase (467 aa).

A disordered region spans residues 1–20 (MSDDTTQIEPAMAQETSPRA). In terms of domain architecture, MTTase N-terminal spans 23 to 143 (RKVFVKTYGC…LPNALARVRG (121 aa)). The [4Fe-4S] cluster site is built by C32, C68, C106, C184, C188, and C191. The 233-residue stretch at 170 to 402 (RKRGVSAFLT…QALLSAQQYA (233 aa)) folds into the Radical SAM core domain. A TRAM domain is found at 405 to 467 (DSMIGRKMDV…TNSLIAQKLA (63 aa)).

The protein belongs to the methylthiotransferase family. MiaB subfamily. Monomer. [4Fe-4S] cluster serves as cofactor.

It is found in the cytoplasm. It catalyses the reaction N(6)-dimethylallyladenosine(37) in tRNA + (sulfur carrier)-SH + AH2 + 2 S-adenosyl-L-methionine = 2-methylsulfanyl-N(6)-dimethylallyladenosine(37) in tRNA + (sulfur carrier)-H + 5'-deoxyadenosine + L-methionine + A + S-adenosyl-L-homocysteine + 2 H(+). Functionally, catalyzes the methylthiolation of N6-(dimethylallyl)adenosine (i(6)A), leading to the formation of 2-methylthio-N6-(dimethylallyl)adenosine (ms(2)i(6)A) at position 37 in tRNAs that read codons beginning with uridine. In Brucella canis (strain ATCC 23365 / NCTC 10854 / RM-666), this protein is tRNA-2-methylthio-N(6)-dimethylallyladenosine synthase.